A 451-amino-acid polypeptide reads, in one-letter code: UDP-N-acetylmuramate--L-alanine ligase (451 aa).

110 to 116 (GTHGKTT) is a binding site for ATP.

It belongs to the MurCDEF family.

It is found in the cytoplasm. The enzyme catalyses UDP-N-acetyl-alpha-D-muramate + L-alanine + ATP = UDP-N-acetyl-alpha-D-muramoyl-L-alanine + ADP + phosphate + H(+). Its pathway is cell wall biogenesis; peptidoglycan biosynthesis. Cell wall formation. The polypeptide is UDP-N-acetylmuramate--L-alanine ligase (Francisella tularensis subsp. tularensis (strain WY96-3418)).